A 132-amino-acid polypeptide reads, in one-letter code: MCPECFFLMLFFCGYRACYCSSSFSSSSSSSSSSSFRSSPAYGFSGRPPGGAGCRERSQRSCLRPGGLPSLTRNPGLQRPFRSRRLCRAVACAPGIPAKGRRDVRGNAVSQTALHVVAAGPCSLPAGCHTPV.

Positions 1–17 are cleaved as a signal peptide; the sequence is MCPECFFLMLFFCGYRA. A compositionally biased stretch (low complexity) spans 25 to 39; it reads SSSSSSSSSSSFRSS. The disordered stretch occupies residues 25 to 79; it reads SSSSSSSSSSSFRSSPAYGFSGRPPGGAGCRERSQRSCLRPGGLPSLTRNPGLQR.

This is an uncharacterized protein from Escherichia coli (strain K12).